A 157-amino-acid polypeptide reads, in one-letter code: Polyferredoxin protein VhcB (157 aa).

4Fe-4S ferredoxin-type domains are found at residues 23–52 (NGISWDREKCEYCGPCAIKCPNDAIMVVNP), 62–92 (KTERANEFKMCDLCGTCVSACPTEALQMGKI), and 100–129 (DRIEFTPSLCDSCGACVEICPQNVLKLNEE). Cys32, Cys35, Cys38, Cys42, Cys72, Cys75, Cys78, Cys82, Cys109, Cys112, Cys115, Cys119, Cys136, Cys139, Cys142, and Cys146 together coordinate [4Fe-4S] cluster.

It depends on [4Fe-4S] cluster as a cofactor.

This Methanococcus voltae protein is Polyferredoxin protein VhcB (vhcB).